The primary structure comprises 561 residues: Proline--tRNA ligase (561 aa).

The protein belongs to the class-II aminoacyl-tRNA synthetase family. ProS type 1 subfamily. In terms of assembly, homodimer.

It localises to the cytoplasm. The catalysed reaction is tRNA(Pro) + L-proline + ATP = L-prolyl-tRNA(Pro) + AMP + diphosphate. Functionally, catalyzes the attachment of proline to tRNA(Pro) in a two-step reaction: proline is first activated by ATP to form Pro-AMP and then transferred to the acceptor end of tRNA(Pro). As ProRS can inadvertently accommodate and process non-cognate amino acids such as alanine and cysteine, to avoid such errors it has two additional distinct editing activities against alanine. One activity is designated as 'pretransfer' editing and involves the tRNA(Pro)-independent hydrolysis of activated Ala-AMP. The other activity is designated 'posttransfer' editing and involves deacylation of mischarged Ala-tRNA(Pro). The misacylated Cys-tRNA(Pro) is not edited by ProRS. The chain is Proline--tRNA ligase from Thermosipho africanus (strain TCF52B).